The chain runs to 336 residues: Phosphate acyltransferase (336 aa).

It belongs to the PlsX family. In terms of assembly, homodimer. Probably interacts with PlsY.

It localises to the cytoplasm. The catalysed reaction is a fatty acyl-[ACP] + phosphate = an acyl phosphate + holo-[ACP]. Its pathway is lipid metabolism; phospholipid metabolism. Catalyzes the reversible formation of acyl-phosphate (acyl-PO(4)) from acyl-[acyl-carrier-protein] (acyl-ACP). This enzyme utilizes acyl-ACP as fatty acyl donor, but not acyl-CoA. The protein is Phosphate acyltransferase of Ectopseudomonas mendocina (strain ymp) (Pseudomonas mendocina).